A 512-amino-acid polypeptide reads, in one-letter code: ATP synthase subunit alpha (512 aa).

169–176 (GDRQTGKT) provides a ligand contact to ATP.

This sequence belongs to the ATPase alpha/beta chains family. In terms of assembly, F-type ATPases have 2 components, CF(1) - the catalytic core - and CF(0) - the membrane proton channel. CF(1) has five subunits: alpha(3), beta(3), gamma(1), delta(1), epsilon(1). CF(0) has three main subunits: a(1), b(2) and c(9-12). The alpha and beta chains form an alternating ring which encloses part of the gamma chain. CF(1) is attached to CF(0) by a central stalk formed by the gamma and epsilon chains, while a peripheral stalk is formed by the delta and b chains.

The protein localises to the cell inner membrane. The catalysed reaction is ATP + H2O + 4 H(+)(in) = ADP + phosphate + 5 H(+)(out). In terms of biological role, produces ATP from ADP in the presence of a proton gradient across the membrane. The alpha chain is a regulatory subunit. The protein is ATP synthase subunit alpha of Rickettsia akari (strain Hartford).